The sequence spans 364 residues: MSRPLTFLGIESSCDDTAAAVVRADGARAEILSSVVDGQTALHAAFGGVVPEIAARAHAERLDLCVERALEEAGLGLRDLDGIAVTAGPGLIGGVLSGVMLAKGLAAGTGLPLVGVNHLAGHALTPRLTDGLAFPYLMLLVSGGHCQFLIARGAEEFSRLGGSIDDAPGEAFDKTAKLLGLPQPGGPSVEAEAATGDPRRFAFPRPMLDRPGCDMSFSGLKTALLRARDGLVAEKGGLTRADRADLCAGFQAAVVEVLAEKTRRALAVYAAEGAAEPALAVAGGVAANGPIRAALTSVAEAAGVRFLAPPLRLCTDNAAMIAWAGIERFRAGGRDGMELSARPRWPLDRSAPALIGSGRKGAKA.

2 residues coordinate Fe cation: H118 and H122. Substrate contacts are provided by residues L140 to G144, D173, G186, and N288. Residue D316 coordinates Fe cation.

The protein belongs to the KAE1 / TsaD family. It depends on Fe(2+) as a cofactor.

It is found in the cytoplasm. It catalyses the reaction L-threonylcarbamoyladenylate + adenosine(37) in tRNA = N(6)-L-threonylcarbamoyladenosine(37) in tRNA + AMP + H(+). Functionally, required for the formation of a threonylcarbamoyl group on adenosine at position 37 (t(6)A37) in tRNAs that read codons beginning with adenine. Is involved in the transfer of the threonylcarbamoyl moiety of threonylcarbamoyl-AMP (TC-AMP) to the N6 group of A37, together with TsaE and TsaB. TsaD likely plays a direct catalytic role in this reaction. The sequence is that of tRNA N6-adenosine threonylcarbamoyltransferase from Cereibacter sphaeroides (strain KD131 / KCTC 12085) (Rhodobacter sphaeroides).